The following is a 555-amino-acid chain: Tau-cadinol synthase (555 aa).

(2E,6E)-farnesyl diphosphate contacts are provided by arginine 270, aspartate 307, aspartate 311, arginine 448, and aspartate 451. Residues aspartate 307 and aspartate 311 each coordinate Mg(2+). Residues 307–311 (DDTYD) carry the DDXXD motif motif. Positions 451, 455, and 459 each coordinate Mg(2+).

This sequence belongs to the terpene synthase family. Mg(2+) is required as a cofactor.

It catalyses the reaction (2E,6E)-farnesyl diphosphate + H2O = tau-cadinol + diphosphate. The enzyme catalyses (2E,6E)-farnesyl diphosphate = (+)-gamma-cadinene + diphosphate. Its pathway is secondary metabolite biosynthesis; terpenoid biosynthesis. In terms of biological role, sesquiterpene synthase that catalyzes the formation of sesquiterpenes and sesquiterpenoid alcohols. Converts farnesyl diphosphate (FPP) to tau-cadinol. Converts FPP to gamma-cadinene. Tau-cadinol is the major product. This Lavandula angustifolia (Lavender) protein is Tau-cadinol synthase.